A 65-amino-acid polypeptide reads, in one-letter code: Large ribosomal subunit protein bL35 (65 aa).

Residues 24-48 (RRKAGKSHLLEHKSSDKKRSMSKTT) form a disordered region. Basic and acidic residues predominate over residues 31-42 (HLLEHKSSDKKR).

It belongs to the bacterial ribosomal protein bL35 family.

The protein is Large ribosomal subunit protein bL35 of Nostoc punctiforme (strain ATCC 29133 / PCC 73102).